The primary structure comprises 615 residues: Aspartokinase (615 aa).

Disordered regions lie at residues 84–105 (ALQP…GTAT) and 127–171 (SSVS…SISQ). Low complexity-rich tracts occupy residues 90–102 (SSSG…SMSG) and 127–164 (SSVS…ATPS). Positions 467–537 (IHSNRKTLSH…EVTVSKDMAI (71 aa)) constitute an ACT domain.

It belongs to the aspartokinase family.

It carries out the reaction L-aspartate + ATP = 4-phospho-L-aspartate + ADP. It participates in amino-acid biosynthesis; L-methionine biosynthesis via de novo pathway; L-homoserine from L-aspartate: step 1/3. The protein operates within amino-acid biosynthesis; L-threonine biosynthesis; L-threonine from L-aspartate: step 1/5. In terms of biological role, phosphorylates aspartate, the first step in the biosynthesis of amino acids that derive from aspartate (the aspartate family of amino acids), including methioinine and threonine, the latter of which is a precursor to isoleucine. The chain is Aspartokinase from Cryptococcus neoformans var. grubii serotype A (strain H99 / ATCC 208821 / CBS 10515 / FGSC 9487) (Filobasidiella neoformans var. grubii).